The chain runs to 961 residues: Glycine dehydrogenase (decarboxylating) (961 aa).

Lys-709 carries the N6-(pyridoxal phosphate)lysine modification.

It belongs to the GcvP family. As to quaternary structure, the glycine cleavage system is composed of four proteins: P, T, L and H. It depends on pyridoxal 5'-phosphate as a cofactor.

It catalyses the reaction N(6)-[(R)-lipoyl]-L-lysyl-[glycine-cleavage complex H protein] + glycine + H(+) = N(6)-[(R)-S(8)-aminomethyldihydrolipoyl]-L-lysyl-[glycine-cleavage complex H protein] + CO2. Functionally, the glycine cleavage system catalyzes the degradation of glycine. The P protein binds the alpha-amino group of glycine through its pyridoxal phosphate cofactor; CO(2) is released and the remaining methylamine moiety is then transferred to the lipoamide cofactor of the H protein. This chain is Glycine dehydrogenase (decarboxylating), found in Streptomyces avermitilis (strain ATCC 31267 / DSM 46492 / JCM 5070 / NBRC 14893 / NCIMB 12804 / NRRL 8165 / MA-4680).